The following is a 424-amino-acid chain: Glutamyl-tRNA reductase (424 aa).

Substrate-binding positions include 49 to 52, S109, 114 to 116, and Q120; these read TCNR and EDQ. C50 (nucleophile) is an active-site residue. 189-194 is an NADP(+) binding site; the sequence is GFGKMS.

This sequence belongs to the glutamyl-tRNA reductase family. In terms of assembly, homodimer.

It carries out the reaction (S)-4-amino-5-oxopentanoate + tRNA(Glu) + NADP(+) = L-glutamyl-tRNA(Glu) + NADPH + H(+). It participates in porphyrin-containing compound metabolism; protoporphyrin-IX biosynthesis; 5-aminolevulinate from L-glutamyl-tRNA(Glu): step 1/2. In terms of biological role, catalyzes the NADPH-dependent reduction of glutamyl-tRNA(Glu) to glutamate 1-semialdehyde (GSA). In Alkaliphilus metalliredigens (strain QYMF), this protein is Glutamyl-tRNA reductase.